The primary structure comprises 668 residues: Tyrosine-protein phosphatase non-receptor type ptp-2 (668 aa).

SH2 domains follow at residues 10-113 (NFYY…KKPV) and 134-232 (WWHG…EEPL). The Tyrosine-protein phosphatase domain occupies 264–580 (ISEEFDRLSQ…QFLYKALAFY (317 aa)). Residue Cys518 is the Phosphocysteine intermediate of the active site. The interval 603–668 (PRRLRPTPNA…SSTLLKSTKK (66 aa)) is disordered. 2 stretches are compositionally biased toward low complexity: residues 616–634 (SSAR…SSRT) and 652–668 (STSS…STKK).

This sequence belongs to the protein-tyrosine phosphatase family. Non-receptor class 2 subfamily. Expressed in embryonic cells, developing vulva, body wall muscles, head neurons and gonadal sheath cells.

The protein resides in the cytoplasm. The catalysed reaction is O-phospho-L-tyrosyl-[protein] + H2O = L-tyrosyl-[protein] + phosphate. Its function is as follows. Involved in embryonic and larval development. Plays a role in oogenesis by regulating mpk-1 phosphorylation and oocyte maturation in response to major sperm protein (MSP). During the formation of neuromuscular junctions at the larval stage, negatively regulates membrane protrusion from body wall muscles probably downstream of receptor egl-15. Plays a role in fluid homeostasis probably downstream of receptor egl-15 and adapter soc-1. Promotes vulva induction and negatively regulates fertility probably downstream of receptor let-23. Negatively regulates daf-2-mediated repression of dauer formation. In Caenorhabditis elegans, this protein is Tyrosine-protein phosphatase non-receptor type ptp-2.